The following is a 99-amino-acid chain: SAGA-associated factor 11 (99 aa).

An SGF11-type zinc finger spans residues 71 to 92 (IHCENCGRDVSANRLAAHLQRC).

The protein belongs to the SGF11 family. Component of the 1.8 MDa SAGA transcription coactivator-HAT complex. SAGA is built of 5 distinct domains with specialized functions. Within the SAGA complex, SUS1, SGF11, SGF73 and UBP8 form an additional subcomplex of SAGA called the DUB module (deubiquitination module). Interacts directly with SGF73, SUS1 and UBP8.

The protein localises to the nucleus. Its function is as follows. Functions as a component of the transcription regulatory histone acetylation (HAT) complex SAGA. At the promoters, SAGA is required for recruitment of the basal transcription machinery. It influences RNA polymerase II transcriptional activity through different activities such as TBP interaction and promoter selectivity, interaction with transcription activators, and chromatin modification through histone acetylation and deubiquitination. SAGA acetylates nucleosomal histone H3 to some extent (to form H3K9ac, H3K14ac, H3K18ac and H3K23ac). SAGA interacts with DNA via upstream activating sequences (UASs). Involved in transcriptional regulation of a subset of SAGA-regulated genes. Within the SAGA complex, participates in a subcomplex, that specifically deubiquitinates histones H2B. The protein is SAGA-associated factor 11 of Saccharomyces cerevisiae (strain RM11-1a) (Baker's yeast).